The chain runs to 469 residues: MSAPRTLYDKIFDDHLVDRQDDGTCLLYIDRHLVHEVTSPQAFEGLRMAGRKVHAPTRTLAVVDHNVPTTPDRAEGIKNEESRIQVEALAKNAADFGVEYYSEKDKRQGIVHIVGPEQGFTLPGMTIVCGDSHTSTHGAFGALAHGIGTSEVEHVLATQTLIQKKAKNMLVRVDGKLPAGVTAKDIILAIIGEIGTAGGTGHVIEFAGEAIEALSMEGRMTVCNMTIEGGARAGLIAPDEKTFEYIKGKPRAPKGEELEMALQYWKTLHTDEGAHFDRTVVLDAANLPPIVSWGSSPEDVISVQGVVPNPDDIADENKRTSKWRALDYMGLKPGTKITDITIDRVFIGSCTNGRIEDLRAAAAVLKDRKVASTVSAMVVPGSGLVKEQAEAEGLDKIFLDAGCEWREPGCSMCLAMNDDRLKPEERCASTSNRNFEGRQGYKGRTHLVSPAMAAAAAIAGHFVDIREWK.

Cysteine 350, cysteine 410, and cysteine 413 together coordinate [4Fe-4S] cluster.

This sequence belongs to the aconitase/IPM isomerase family. LeuC type 1 subfamily. As to quaternary structure, heterodimer of LeuC and LeuD. Requires [4Fe-4S] cluster as cofactor.

It carries out the reaction (2R,3S)-3-isopropylmalate = (2S)-2-isopropylmalate. Its pathway is amino-acid biosynthesis; L-leucine biosynthesis; L-leucine from 3-methyl-2-oxobutanoate: step 2/4. In terms of biological role, catalyzes the isomerization between 2-isopropylmalate and 3-isopropylmalate, via the formation of 2-isopropylmaleate. This is 3-isopropylmalate dehydratase large subunit from Allorhizobium ampelinum (strain ATCC BAA-846 / DSM 112012 / S4) (Agrobacterium vitis (strain S4)).